The following is a 446-amino-acid chain: Light-independent protochlorophyllide reductase subunit N (446 aa).

Cysteine 22, cysteine 47, and cysteine 107 together coordinate [4Fe-4S] cluster.

This sequence belongs to the BchN/ChlN family. In terms of assembly, protochlorophyllide reductase is composed of three subunits; ChlL, ChlN and ChlB. Forms a heterotetramer of two ChlB and two ChlN subunits. It depends on [4Fe-4S] cluster as a cofactor.

It is found in the plastid. Its subcellular location is the chloroplast. The catalysed reaction is chlorophyllide a + oxidized 2[4Fe-4S]-[ferredoxin] + 2 ADP + 2 phosphate = protochlorophyllide a + reduced 2[4Fe-4S]-[ferredoxin] + 2 ATP + 2 H2O. Its pathway is porphyrin-containing compound metabolism; chlorophyll biosynthesis (light-independent). In terms of biological role, component of the dark-operative protochlorophyllide reductase (DPOR) that uses Mg-ATP and reduced ferredoxin to reduce ring D of protochlorophyllide (Pchlide) to form chlorophyllide a (Chlide). This reaction is light-independent. The NB-protein (ChlN-ChlB) is the catalytic component of the complex. The sequence is that of Light-independent protochlorophyllide reductase subunit N from Mesostigma viride (Green alga).